The sequence spans 377 residues: Nitric oxide reductase FlRd-NAD(+) reductase (377 aa).

It belongs to the FAD-dependent oxidoreductase family. It depends on FAD as a cofactor.

Its subcellular location is the cytoplasm. It catalyses the reaction 2 reduced [nitric oxide reductase rubredoxin domain] + NAD(+) + H(+) = 2 oxidized [nitric oxide reductase rubredoxin domain] + NADH. It participates in nitrogen metabolism; nitric oxide reduction. In terms of biological role, one of at least two accessory proteins for anaerobic nitric oxide (NO) reductase. Reduces the rubredoxin moiety of NO reductase. In Shigella boydii serotype 18 (strain CDC 3083-94 / BS512), this protein is Nitric oxide reductase FlRd-NAD(+) reductase.